The chain runs to 186 residues: ADP-ribosylation factor-like protein 6 (186 aa).

Residue G2 is the site of N-myristoyl glycine attachment. Residues 24-31, T50, 69-73, G72, 130-133, and A164 each bind GTP; these read GLDNSGKT, DMSGQ, and NKMD. A Mg(2+)-binding site is contributed by T50.

Belongs to the small GTPase superfamily. Arf family. As to quaternary structure, interacts with SEC61B, ARL6IP1, ARL6IP2, ARL6IP3, ARL6IP4 ARL6IP5 and ARL6IP6. Interacts (GTP-bound form) with the BBSome a complex that contains BBS1, BBS2, BBS4, BBS5, BBS7, BBS8/TTC8, BBS9 and BBIP10. Interacts (GTP-free form) with IFT27. Most abundant in brain and kidney. Expressed in heart and eye. Isoform 2 is expressed only in the retina.

Its subcellular location is the cell projection. The protein resides in the cilium membrane. It localises to the cytoplasm. The protein localises to the cytoskeleton. It is found in the cilium axoneme. Its subcellular location is the cilium basal body. In terms of biological role, involved in membrane protein trafficking at the base of the ciliary organelle. Mediates recruitment onto plasma membrane of the BBSome complex which would constitute a coat complex required for sorting of specific membrane proteins to the primary cilia. Together with BBS1, is necessary for correct trafficking of PKD1 to primary cilia. Together with the BBSome complex and LTZL1, controls SMO ciliary trafficking and contributes to the sonic hedgehog (SHH) pathway regulation. May regulate cilia assembly and disassembly and subsequent ciliary signaling events such as the Wnt signaling cascade. Isoform 2 may be required for proper retinal function and organization. The chain is ADP-ribosylation factor-like protein 6 (Arl6) from Mus musculus (Mouse).